A 220-amino-acid polypeptide reads, in one-letter code: ATP-dependent Clp protease proteolytic subunit (220 aa).

The active-site Nucleophile is Ser-122. The active site involves His-147.

It belongs to the peptidase S14 family. In terms of assembly, fourteen ClpP subunits assemble into 2 heptameric rings which stack back to back to give a disk-like structure with a central cavity, resembling the structure of eukaryotic proteasomes.

It localises to the cytoplasm. The enzyme catalyses Hydrolysis of proteins to small peptides in the presence of ATP and magnesium. alpha-casein is the usual test substrate. In the absence of ATP, only oligopeptides shorter than five residues are hydrolyzed (such as succinyl-Leu-Tyr-|-NHMec, and Leu-Tyr-Leu-|-Tyr-Trp, in which cleavage of the -Tyr-|-Leu- and -Tyr-|-Trp bonds also occurs).. Functionally, cleaves peptides in various proteins in a process that requires ATP hydrolysis. Has a chymotrypsin-like activity. Plays a major role in the degradation of misfolded proteins. This Colwellia psychrerythraea (strain 34H / ATCC BAA-681) (Vibrio psychroerythus) protein is ATP-dependent Clp protease proteolytic subunit.